A 483-amino-acid polypeptide reads, in one-letter code: Membrane-bound lytic murein transglycosylase F (483 aa).

An N-terminal signal peptide occupies residues 1-18 (MKGLVIRISVALALLLWA). The non-LT domain stretch occupies residues 19–270 (VDMVFPWQQI…RIEEKYFSHI (252 aa)). The LT domain stretch occupies residues 272-483 (QFDYVDIKSY…IMITPQNSQD (212 aa)). Glu315 is an active-site residue.

The protein in the N-terminal section; belongs to the bacterial solute-binding protein 3 family. It in the C-terminal section; belongs to the transglycosylase Slt family.

It is found in the cell outer membrane. The enzyme catalyses Exolytic cleavage of the (1-&gt;4)-beta-glycosidic linkage between N-acetylmuramic acid (MurNAc) and N-acetylglucosamine (GlcNAc) residues in peptidoglycan, from either the reducing or the non-reducing ends of the peptidoglycan chains, with concomitant formation of a 1,6-anhydrobond in the MurNAc residue.. Functionally, murein-degrading enzyme that degrades murein glycan strands and insoluble, high-molecular weight murein sacculi, with the concomitant formation of a 1,6-anhydromuramoyl product. Lytic transglycosylases (LTs) play an integral role in the metabolism of the peptidoglycan (PG) sacculus. Their lytic action creates space within the PG sacculus to allow for its expansion as well as for the insertion of various structures such as secretion systems and flagella. This Actinobacillus succinogenes (strain ATCC 55618 / DSM 22257 / CCUG 43843 / 130Z) protein is Membrane-bound lytic murein transglycosylase F.